A 173-amino-acid polypeptide reads, in one-letter code: Large ribosomal subunit protein uL10 (173 aa).

The protein belongs to the universal ribosomal protein uL10 family. In terms of assembly, part of the ribosomal stalk of the 50S ribosomal subunit. The N-terminus interacts with L11 and the large rRNA to form the base of the stalk. The C-terminus forms an elongated spine to which L12 dimers bind in a sequential fashion forming a multimeric L10(L12)X complex.

Forms part of the ribosomal stalk, playing a central role in the interaction of the ribosome with GTP-bound translation factors. In Desulfatibacillum aliphaticivorans, this protein is Large ribosomal subunit protein uL10.